The chain runs to 64 residues: Cytochrome c oxidase subunit 2 (64 aa).

Residues 1 to 14 lie on the Mitochondrial intermembrane side of the membrane; sequence MAHPSQLGFQDAAS. A helical transmembrane segment spans residues 15–45; sequence PMMEELLHFHDHALMVVFLISTFVLYIILTM. The Mitochondrial matrix portion of the chain corresponds to 46–64; that stretch reads LTTKLTDKLILESHEIEII.

Belongs to the cytochrome c oxidase subunit 2 family. In terms of assembly, component of the cytochrome c oxidase (complex IV, CIV), a multisubunit enzyme composed of 14 subunits. The complex is composed of a catalytic core of 3 subunits MT-CO1, MT-CO2 and MT-CO3, encoded in the mitochondrial DNA, and 11 supernumerary subunits COX4I, COX5A, COX5B, COX6A, COX6B, COX6C, COX7A, COX7B, COX7C, COX8 and NDUFA4, which are encoded in the nuclear genome. The complex exists as a monomer or a dimer and forms supercomplexes (SCs) in the inner mitochondrial membrane with NADH-ubiquinone oxidoreductase (complex I, CI) and ubiquinol-cytochrome c oxidoreductase (cytochrome b-c1 complex, complex III, CIII), resulting in different assemblies (supercomplex SCI(1)III(2)IV(1) and megacomplex MCI(2)III(2)IV(2)). Found in a complex with TMEM177, COA6, COX18, COX20, SCO1 and SCO2. Interacts with TMEM177 in a COX20-dependent manner. Interacts with COX20. Interacts with COX16. Cu cation is required as a cofactor.

The protein resides in the mitochondrion inner membrane. The enzyme catalyses 4 Fe(II)-[cytochrome c] + O2 + 8 H(+)(in) = 4 Fe(III)-[cytochrome c] + 2 H2O + 4 H(+)(out). Its function is as follows. Component of the cytochrome c oxidase, the last enzyme in the mitochondrial electron transport chain which drives oxidative phosphorylation. The respiratory chain contains 3 multisubunit complexes succinate dehydrogenase (complex II, CII), ubiquinol-cytochrome c oxidoreductase (cytochrome b-c1 complex, complex III, CIII) and cytochrome c oxidase (complex IV, CIV), that cooperate to transfer electrons derived from NADH and succinate to molecular oxygen, creating an electrochemical gradient over the inner membrane that drives transmembrane transport and the ATP synthase. Cytochrome c oxidase is the component of the respiratory chain that catalyzes the reduction of oxygen to water. Electrons originating from reduced cytochrome c in the intermembrane space (IMS) are transferred via the dinuclear copper A center (CU(A)) of subunit 2 and heme A of subunit 1 to the active site in subunit 1, a binuclear center (BNC) formed by heme A3 and copper B (CU(B)). The BNC reduces molecular oxygen to 2 water molecules using 4 electrons from cytochrome c in the IMS and 4 protons from the mitochondrial matrix. The protein is Cytochrome c oxidase subunit 2 (mt-co2) of Geophagus steindachneri (Red hump earth eater).